Reading from the N-terminus, the 533-residue chain is Chromosomal replication initiator protein DnaA (533 aa).

The domain I, interacts with DnaA modulators stretch occupies residues 1 to 72 (MNDFWQHCSA…DLARDFWNAP (72 aa)). The interval 72-196 (PIEVQFVLDP…EAADSMYERS (125 aa)) is domain II. The segment at 83 to 110 (AGQRSPAGATPLAPRAPLPSANPAPVGP) is disordered. Over residues 96–110 (PRAPLPSANPAPVGP) the composition is skewed to pro residues. The domain III, AAA+ region stretch occupies residues 197–413 (KLNPVLTFDN…GALRKILAYS (217 aa)). Residues glycine 241, glycine 243, lysine 244, and threonine 245 each coordinate ATP. Residues 414-533 (KFHGREITIE…LHVLEQTLKG (120 aa)) are domain IV, binds dsDNA.

It belongs to the DnaA family. Oligomerizes as a right-handed, spiral filament on DNA at oriC.

The protein localises to the cytoplasm. Its function is as follows. Plays an essential role in the initiation and regulation of chromosomal replication. ATP-DnaA binds to the origin of replication (oriC) to initiate formation of the DNA replication initiation complex once per cell cycle. Binds the DnaA box (a 9 base pair repeat at the origin) and separates the double-stranded (ds)DNA. Forms a right-handed helical filament on oriC DNA; dsDNA binds to the exterior of the filament while single-stranded (ss)DNA is stabiized in the filament's interior. The ATP-DnaA-oriC complex binds and stabilizes one strand of the AT-rich DNA unwinding element (DUE), permitting loading of DNA polymerase. After initiation quickly degrades to an ADP-DnaA complex that is not apt for DNA replication. Binds acidic phospholipids. This chain is Chromosomal replication initiator protein DnaA, found in Burkholderia mallei (strain NCTC 10247).